Reading from the N-terminus, the 1016-residue chain is Kinesin-like protein KIN-14K (1016 aa).

The 108-residue stretch at 14–121 (ADRRAEVIEW…CLLVLRESVS (108 aa)) folds into the Calponin-homology (CH) domain. The interval 123–176 (GLRDGTSKAPLRKKWRVPETGEPLVPGVAQGKTSPGEDKRNGLPDPKSQQKTPI) is disordered. Residues 288 to 354 (VNGTNEENQM…EVMTSMHEQQ (67 aa)) are a coiled coil. Residues 481-808 (NIRVYCRVRP…LKFAERVSGV (328 aa)) form the Kinesin motor domain. 565 to 572 (GQTGSGKT) is an ATP binding site. Residues 820-852 (KDIKELLEQVASLKDTIVRKDTEIEQLQLMKDK) adopt a coiled-coil conformation. 2 stretches are compositionally biased toward polar residues: residues 884-893 (NQQSQLSDPQ) and 990-1004 (KTPNQTRVQSSQLIG). Disordered regions lie at residues 884–912 (NQQSQLSDPQSYAEVNRDGGPTSYTDITP) and 971–1016 (LTKN…RWQK).

This sequence belongs to the TRAFAC class myosin-kinesin ATPase superfamily. Kinesin family. KIN-14 subfamily.

The protein is Kinesin-like protein KIN-14K of Oryza sativa subsp. japonica (Rice).